Reading from the N-terminus, the 348-residue chain is Ion-translocating oxidoreductase complex subunit D (348 aa).

The next 5 membrane-spanning stretches (helical) occupy residues 15 to 35, 36 to 56, 67 to 87, 88 to 108, and 125 to 145; these read LTAK…GMQA, YFFG…AVAI, PTAF…LAIS, IPPY…LLLA, and VAYA…LVPI. Residue T186 is modified to FMN phosphoryl threonine. 5 helical membrane passes run 212-232, 241-261, 265-285, 298-318, and 320-340; these read LFAN…LLLI, IPAA…LLLP, LNVV…FIAT, LIFG…GNYP, and AVAF…HYTQ.

The protein belongs to the NqrB/RnfD family. In terms of assembly, the complex is composed of six subunits: RnfA, RnfB, RnfC, RnfD, RnfE and RnfG. It depends on FMN as a cofactor.

It is found in the cell inner membrane. Part of a membrane-bound complex that couples electron transfer with translocation of ions across the membrane. In Actinobacillus pleuropneumoniae serotype 5b (strain L20), this protein is Ion-translocating oxidoreductase complex subunit D.